A 475-amino-acid chain; its full sequence is Tryptophan synthase beta chain 2, chloroplastic (475 aa).

The span at 1-21 shows a compositional bias: polar residues; it reads MATASTAATFRPSSVSASSEL. Residues 1-44 are disordered; sequence MATASTAATFRPSSVSASSELTHLRSPSKLPKFTPLPSARSRSS. Residues 1 to 51 constitute a chloroplast transit peptide; the sequence is MATASTAATFRPSSVSASSELTHLRSPSKLPKFTPLPSARSRSSSSFSVSC. At threonine 52 the chain carries N-acetylthreonine. Lysine 170 is modified (N6-(pyridoxal phosphate)lysine).

The protein belongs to the TrpB family. As to quaternary structure, tetramer of two alpha and two beta chains. It depends on pyridoxal 5'-phosphate as a cofactor.

The protein localises to the plastid. It localises to the chloroplast. It carries out the reaction (1S,2R)-1-C-(indol-3-yl)glycerol 3-phosphate + L-serine = D-glyceraldehyde 3-phosphate + L-tryptophan + H2O. It participates in amino-acid biosynthesis; L-tryptophan biosynthesis; L-tryptophan from chorismate: step 5/5. Its function is as follows. The beta subunit is responsible for the synthesis of L-tryptophan from indole and L-serine. The sequence is that of Tryptophan synthase beta chain 2, chloroplastic (TSB2) from Arabidopsis thaliana (Mouse-ear cress).